The sequence spans 219 residues: NAD(P)H-quinone oxidoreductase subunit I (219 aa).

4Fe-4S ferredoxin-type domains follow at residues 55–84 and 95–124; these read GRIHYEFDKCIACEVCVRVCPINLPVVDWV and RNYSIDFGVCIFCGNCVEYCPTNCLSMTEE. 8 residues coordinate [4Fe-4S] cluster: C64, C67, C70, C74, C104, C107, C110, and C114.

This sequence belongs to the complex I 23 kDa subunit family. NDH-1 is composed of at least 11 different subunits. Requires [4Fe-4S] cluster as cofactor.

The protein resides in the cellular thylakoid membrane. The catalysed reaction is a plastoquinone + NADH + (n+1) H(+)(in) = a plastoquinol + NAD(+) + n H(+)(out). It carries out the reaction a plastoquinone + NADPH + (n+1) H(+)(in) = a plastoquinol + NADP(+) + n H(+)(out). Functionally, NDH-1 shuttles electrons from an unknown electron donor, via FMN and iron-sulfur (Fe-S) centers, to quinones in the respiratory and/or the photosynthetic chain. The immediate electron acceptor for the enzyme in this species is believed to be plastoquinone. Couples the redox reaction to proton translocation, and thus conserves the redox energy in a proton gradient. The polypeptide is NAD(P)H-quinone oxidoreductase subunit I (Prochlorococcus marinus (strain SARG / CCMP1375 / SS120)).